Consider the following 224-residue polypeptide: F420-dependent NADP reductase (224 aa).

Residues 9-12, 31-32, Lys-36, Val-74, Val-100, and Ala-145 contribute to the NADP(+) site; these read TGDQ and SR.

This sequence belongs to the F420-dependent NADP reductase family. Homotetramer.

It catalyses the reaction reduced coenzyme F420-(gamma-L-Glu)(n) + NADP(+) = oxidized coenzyme F420-(gamma-L-Glu)(n) + NADPH + 2 H(+). Functionally, catalyzes the reduction of NADP(+) with F420H(2) via hydride transfer, and the reverse reaction, i.e. the reduction of F420 with NADPH. Probably functions in the regeneration of NADPH required in biosynthetic reactions. This is F420-dependent NADP reductase from Methanothermobacter marburgensis (strain ATCC BAA-927 / DSM 2133 / JCM 14651 / NBRC 100331 / OCM 82 / Marburg) (Methanobacterium thermoautotrophicum).